The chain runs to 858 residues: DNA mismatch repair protein MutS (858 aa).

Position 613–620 (613–620 (GPNMAGKS)) interacts with ATP.

Belongs to the DNA mismatch repair MutS family.

This protein is involved in the repair of mismatches in DNA. It is possible that it carries out the mismatch recognition step. This protein has a weak ATPase activity. The sequence is that of DNA mismatch repair protein MutS from Dehalococcoides mccartyi (strain CBDB1).